The sequence spans 252 residues: 2-succinyl-6-hydroxy-2,4-cyclohexadiene-1-carboxylate synthase (252 aa).

This sequence belongs to the AB hydrolase superfamily. MenH family. Monomer.

It carries out the reaction 5-enolpyruvoyl-6-hydroxy-2-succinyl-cyclohex-3-ene-1-carboxylate = (1R,6R)-6-hydroxy-2-succinyl-cyclohexa-2,4-diene-1-carboxylate + pyruvate. It functions in the pathway quinol/quinone metabolism; 1,4-dihydroxy-2-naphthoate biosynthesis; 1,4-dihydroxy-2-naphthoate from chorismate: step 3/7. Its pathway is quinol/quinone metabolism; menaquinone biosynthesis. Functionally, catalyzes a proton abstraction reaction that results in 2,5-elimination of pyruvate from 2-succinyl-5-enolpyruvyl-6-hydroxy-3-cyclohexene-1-carboxylate (SEPHCHC) and the formation of 2-succinyl-6-hydroxy-2,4-cyclohexadiene-1-carboxylate (SHCHC). The polypeptide is 2-succinyl-6-hydroxy-2,4-cyclohexadiene-1-carboxylate synthase (Escherichia coli O9:H4 (strain HS)).